A 447-amino-acid chain; its full sequence is Probable ethanolamine kinase B (447 aa).

A compositionally biased stretch (low complexity) spans 178–208 (STTISTSTSTSTSTSSTSPSTSPSLENSTLS). A disordered region spans residues 178–217 (STTISTSTSTSTSTSSTSPSTSPSLENSTLSPRNMNTQTS).

Belongs to the choline/ethanolamine kinase family.

Its subcellular location is the cytoplasm. It carries out the reaction ethanolamine + ATP = phosphoethanolamine + ADP + H(+). It participates in phospholipid metabolism; phosphatidylethanolamine biosynthesis; phosphatidylethanolamine from ethanolamine: step 1/3. In terms of biological role, highly specific for ethanolamine phosphorylation. May be a rate-controlling step in phosphatidylethanolamine biosynthesis. This Dictyostelium discoideum (Social amoeba) protein is Probable ethanolamine kinase B (etnkB).